The primary structure comprises 258 residues: Acetylglutamate kinase (258 aa).

Substrate-binding positions include 41 to 42 (GG), Arg63, and Asn156.

The protein belongs to the acetylglutamate kinase family. ArgB subfamily. As to quaternary structure, homodimer.

The protein localises to the cytoplasm. It carries out the reaction N-acetyl-L-glutamate + ATP = N-acetyl-L-glutamyl 5-phosphate + ADP. Its pathway is amino-acid biosynthesis; L-arginine biosynthesis; N(2)-acetyl-L-ornithine from L-glutamate: step 2/4. Functionally, catalyzes the ATP-dependent phosphorylation of N-acetyl-L-glutamate. This Geobacillus stearothermophilus (Bacillus stearothermophilus) protein is Acetylglutamate kinase.